A 118-amino-acid polypeptide reads, in one-letter code: Large ribosomal subunit protein uL18 (118 aa).

It belongs to the universal ribosomal protein uL18 family. Part of the 50S ribosomal subunit; part of the 5S rRNA/L5/L18/L25 subcomplex. Contacts the 5S and 23S rRNAs.

In terms of biological role, this is one of the proteins that bind and probably mediate the attachment of the 5S RNA into the large ribosomal subunit, where it forms part of the central protuberance. The polypeptide is Large ribosomal subunit protein uL18 (Zymomonas mobilis subsp. mobilis (strain ATCC 31821 / ZM4 / CP4)).